The sequence spans 162 residues: Cyclic pyranopterin monophosphate synthase (162 aa).

Residues 75–77 (LCH) and 113–114 (ME) contribute to the substrate site. Aspartate 128 is a catalytic residue.

It belongs to the MoaC family. Homohexamer; trimer of dimers.

It carries out the reaction (8S)-3',8-cyclo-7,8-dihydroguanosine 5'-triphosphate = cyclic pyranopterin phosphate + diphosphate. It functions in the pathway cofactor biosynthesis; molybdopterin biosynthesis. Functionally, catalyzes the conversion of (8S)-3',8-cyclo-7,8-dihydroguanosine 5'-triphosphate to cyclic pyranopterin monophosphate (cPMP). The polypeptide is Cyclic pyranopterin monophosphate synthase (Burkholderia ambifaria (strain MC40-6)).